A 38-amino-acid chain; its full sequence is Toxin BmK NSPK (38 aa).

3 disulfides stabilise this stretch: cysteine 7–cysteine 27, cysteine 13–cysteine 32, and cysteine 17–cysteine 34.

As to expression, expressed by the venom gland.

It is found in the secreted. Functionally, blocks voltage-gated potassium (Kv) channel and augments neurite extension via NGF/TrkA signaling pathway. This Olivierus martensii (Manchurian scorpion) protein is Toxin BmK NSPK.